A 174-amino-acid polypeptide reads, in one-letter code: Peptide deformylase (174 aa).

Positions 96 and 138 each coordinate Fe cation. E139 is a catalytic residue. H142 is a Fe cation binding site.

The protein belongs to the polypeptide deformylase family. Requires Fe(2+) as cofactor.

The catalysed reaction is N-terminal N-formyl-L-methionyl-[peptide] + H2O = N-terminal L-methionyl-[peptide] + formate. Functionally, removes the formyl group from the N-terminal Met of newly synthesized proteins. Requires at least a dipeptide for an efficient rate of reaction. N-terminal L-methionine is a prerequisite for activity but the enzyme has broad specificity at other positions. This chain is Peptide deformylase, found in Helicobacter pylori (strain P12).